Consider the following 774-residue polypeptide: Neprilysin-2 (774 aa).

Residues 1-20 lie on the Cytoplasmic side of the membrane; it reads MQTVIQNPNWWRRRNKLEKS. Residues 21–41 form a helical; Signal-anchor for type II membrane protein membrane-spanning segment; sequence LLVSLGIMFVVLATGFGLWIG. Topologically, residues 42 to 774 are extracellular; that stretch reads KVLRTSPPSN…MNPVQKCEVW (733 aa). Positions 50–79 are disordered; the sequence is SNPQATALHGDSTTINQVPTGTASKGKSGD. The segment covering 60–74 has biased composition (polar residues); that stretch reads DSTTINQVPTGTASK. In terms of domain architecture, Peptidase M13 spans 83 to 774; it reads VCLTQECIHT…MNPVQKCEVW (692 aa). Intrachain disulfides connect Cys84-Cys89, Cys107-Cys759, Cys115-Cys719, Cys171-Cys424, and Cys646-Cys771. 7 N-linked (GlcNAc...) asparagine glycosylation sites follow: Asn173, Asn239, Asn264, Asn305, Asn315, Asn358, and Asn554. Zn(2+) is bound at residue His609. Glu610 is an active-site residue. His613 serves as a coordination point for Zn(2+). Asn653 carries an N-linked (GlcNAc...) asparagine glycan. Glu671 contributes to the Zn(2+) binding site. Residue Asp675 is the Proton donor of the active site.

This sequence belongs to the peptidase M13 family. Zn(2+) is required as a cofactor. N-glycosylated. In terms of processing, the soluble form is probably produced by proteolytic cleavage. Detected in the stellate cells in the main segment and the bar-shaped cells in the initial segment of male and female Malpighian tubules (at protein level). Expressed in the spermatheca (at protein level). Expressed in the somatic cyst cells of the testes, with increased expression at the tail end of elongating cysts. Expressed in the ovaries with strong expression in the posterior polar cells and in border cells of stage 8, 9, and 10 follicles. In adults and third-instar larvae, expressed in the brain, ventral ganglion, and stellate cells. Also expressed in the foregut and the imaginal disks (eye, antennal and leg) of third-instar larvae. In stage 17 embryos, expressed in the tracheal system, foregut, hindgut and epidermis. Also expressed in the stellate cell progenitors of the caudal visceral mesoderm in embryos.

It is found in the cell membrane. The protein localises to the secreted. It catalyses the reaction Preferential cleavage of polypeptides between hydrophobic residues, particularly with Phe or Tyr at P1'.. Metalloendoprotease which cleaves peptides such as tachykinin peptide TK-2 at the amino side of hydrophobic residues. Functions in female fertility, embryogenesis and memory formation. Required in females for normal patterns of egg laying, probably due to its function in sperm retention and preventing sperm displacement by rival ejaculates. Also required for normal patterns of hatching due to its important role in early embryonic development. Required in the dorsal paired medial neurons for the proper formation of middle-term memory. Also required in the mushroom body neurons where it functions redundantly with neprilysins Nep3 and Nep4 in normal long-term memory formation. This Drosophila melanogaster (Fruit fly) protein is Neprilysin-2.